A 498-amino-acid chain; its full sequence is MRINLTTSDPEVSIREKKNLGRIAQIIGPVLDVAFPPGKMPNIYNALVVKGRDTLGQEINVTCEVQQLLGNNRVRAVAMSATEGLKRGMDVVDMGSPLSVPVGGATLGRIFNVLGEPVDNLGPVDTRTTSPIHKSAPAFIQLDTKLSIFETGIKVVDLLAPYRRGGKIGLFGGAGVGKTVLIMELINNIAKAHGGVSVFGGVGERTREGNDLYMEMKESGVINEQNLAESKVALVYGQMNEPPGARMRVGLTALTMAEYFRDVNEQDVLLFIDNIFRFVQAGSEVSALLGRMPSAVGYQPTLSTEMGTLQERITSTKKGSITSIQAVYVPADDLTDPAPATTFAHLDATTVLSRGLAAKGIYPAVDPLDSTSTMLQPRIVGEEHYETAQQVKQTLQRYKELQDIIAILGLDELSEEDRLTVARARKIERFLSQPFFVAEVFTGSPGKYVGLAETIRGFKLILSGEFDSLPEQAFYLVGNIDEATAKATNLEMESKLKK.

Thr-6 carries the phosphothreonine modification. Ser-13 is subject to Phosphoserine. 172–179 serves as a coordination point for ATP; the sequence is GGAGVGKT.

The protein belongs to the ATPase alpha/beta chains family. As to quaternary structure, F-type ATPases have 2 components, CF(1) - the catalytic core - and CF(0) - the membrane proton channel. CF(1) has five subunits: alpha(3), beta(3), gamma(1), delta(1), epsilon(1). CF(0) has four main subunits: a(1), b(1), b'(1) and c(9-12).

The protein localises to the plastid. It is found in the chloroplast thylakoid membrane. The catalysed reaction is ATP + H2O + 4 H(+)(in) = ADP + phosphate + 5 H(+)(out). In terms of biological role, produces ATP from ADP in the presence of a proton gradient across the membrane. The catalytic sites are hosted primarily by the beta subunits. The protein is ATP synthase subunit beta, chloroplastic of Nasturtium officinale (Watercress).